A 423-amino-acid chain; its full sequence is Dihydrolipoyllysine-residue succinyltransferase component of 2-oxoglutarate dehydrogenase complex (423 aa).

Residues 1 to 76 enclose the Lipoyl-binding domain; sequence MPEVKVPELA…EVGQAIAVIG (76 aa). Lys42 is modified (N6-lipoyllysine). The disordered stretch occupies residues 76–185; sequence GEGSGNASKE…APAKEEKKYN (110 aa). A compositionally biased stretch (polar residues) spans 80–96; sequence GNASKENSNDNTPQQND. The span at 99–115 shows a compositional bias: basic and acidic residues; the sequence is TNNKKEETTNKSADKAE. The segment covering 116 to 131 has biased composition (polar residues); sequence VNQTNDDNQQRVNATP. Residues 128 to 164 form the Peripheral subunit-binding (PSBD) domain; sequence NATPSARRYARENGVNLAEVSPKTNDVVRKEDIDKKQ. The segment covering 153–164 has biased composition (basic and acidic residues); that stretch reads DVVRKEDIDKKQ. Residues 165–177 are compositionally biased toward low complexity; that stretch reads QAPASTQTTQQAP. Residues His394 and Asp398 contribute to the active site.

This sequence belongs to the 2-oxoacid dehydrogenase family. Forms a 24-polypeptide structural core with octahedral symmetry. Part of the 2-oxoglutarate dehydrogenase (OGDH) complex composed of E1 (2-oxoglutarate dehydrogenase), E2 (dihydrolipoamide succinyltransferase) and E3 (dihydrolipoamide dehydrogenase); the complex contains multiple copies of the three enzymatic components (E1, E2 and E3). It depends on (R)-lipoate as a cofactor.

It carries out the reaction N(6)-[(R)-dihydrolipoyl]-L-lysyl-[protein] + succinyl-CoA = N(6)-[(R)-S(8)-succinyldihydrolipoyl]-L-lysyl-[protein] + CoA. It functions in the pathway amino-acid degradation; L-lysine degradation via saccharopine pathway; glutaryl-CoA from L-lysine: step 6/6. Functionally, E2 component of the 2-oxoglutarate dehydrogenase (OGDH) complex which catalyzes the second step in the conversion of 2-oxoglutarate to succinyl-CoA and CO(2). In Staphylococcus aureus (strain MRSA252), this protein is Dihydrolipoyllysine-residue succinyltransferase component of 2-oxoglutarate dehydrogenase complex (odhB).